The primary structure comprises 367 residues: Zorya protein ZorE (367 aa).

Component of antiviral defense system Zorya type II, composed of ZorA, ZorB and ZorE. Expression of Zorya type II in E.coli (strain MG1655) confers resistance to phages SECphi7 and T7. While most T7 infected Zorya-containing cells undergo abortive infection, a minority produce viable phage progeny. These eventually accumulate to a high multiplicity of infection, leading to culture collapse by 170 minutes after initial infection. ZorA and ZorB probably assemble in the cell inner membrane and exert their effect there. This may be a nuclease. This chain is Zorya protein ZorE, found in Escherichia coli (strain ATCC 8739 / DSM 1576 / NBRC 3972 / NCIMB 8545 / WDCM 00012 / Crooks).